The primary structure comprises 628 residues: Leucine-rich repeat and fibronectin type-III domain-containing protein 3 (628 aa).

Positions 1–16 (MAVLPLLLCLLPLAPA) are cleaved as a signal peptide. Topologically, residues 17 to 540 (SSPPQPASPS…APHAPFLGGT (524 aa)) are extracellular. The LRRNT domain occupies 19-59 (PPQPASPSPCPRRCRCQTQSLPLSVLCPGAGLLFVPPSLDR). LRR repeat units follow at residues 60 to 83 (RAAE…ANMT), 84 to 105 (GLLH…AFSD), 108 to 129 (ALRA…QLRG), 132 to 153 (NLRH…ALDD), 157 to 178 (TLED…ALGR), 181 to 202 (NVNT…AFSR), and 205 to 226 (KLAR…PLFS). An LRRCT domain is found at 249–295 (NPLHCNCELVWLRRLAREDDLEACASPPALGGRYFWAVGEEEFVCEP). Positions 295-382 (PPVVTHRSPP…GEATAAVELT (88 aa)) constitute an Ig-like domain. C317 and C366 are joined by a disulfide. N348 and N393 each carry an N-linked (GlcNAc...) asparagine glycan. The tract at residues 380–433 (ELTVGPPPPPQLANSTSCDPPRDGEPDALTPPSAASASASAKAAEAGPPTDRGV) is disordered. Positions 410–428 (PPSAASASASAKAAEAGPP) are enriched in low complexity. Positions 427–525 (PPTDRGVQVT…GCNRFSTEPA (99 aa)) constitute a Fibronectin type-III domain. The helical transmembrane segment at 541 to 561 (MIIALGGVIVASVLVFIFVLL) threads the bilayer. At 562–628 (MRYKVHGGQP…WGPSHEPMGP (67 aa)) the chain is on the cytoplasmic side. A disordered region spans residues 570–609 (QPPGKTKASAPVSSVCSQTNGALGPMPAPPAPEPSAPRAH). Residues 580 to 590 (PVSSVCSQTNG) show a composition bias toward polar residues. Pro residues predominate over residues 595–604 (MPAPPAPEPS).

This sequence belongs to the LRFN family. Can form heteromeric complexes with LRFN1, LRFN2, LRFN4 and LRFN5. Able to form homomeric complexes across cell junctions, between adjacent cells. Does not interact with DLG4. In terms of processing, N-glycosylated.

The protein localises to the cell membrane. Its subcellular location is the cell projection. It localises to the axon. It is found in the dendrite. The protein resides in the synapse. The protein localises to the presynaptic cell membrane. Its subcellular location is the postsynaptic cell membrane. In terms of biological role, cell adhesion molecule that mediates homophilic cell-cell adhesion in a Ca(2+)-independent manner. Promotes neurite outgrowth in hippocampal neurons. This is Leucine-rich repeat and fibronectin type-III domain-containing protein 3 (LRFN3) from Bos taurus (Bovine).